Here is a 423-residue protein sequence, read N- to C-terminus: Glutamyl-tRNA reductase (423 aa).

Substrate contacts are provided by residues 49 to 52 (TCNR), Ser-107, 112 to 114 (EPQ), and Gln-118. The Nucleophile role is filled by Cys-50. 187–192 (GAGETI) is an NADP(+) binding site.

It belongs to the glutamyl-tRNA reductase family. In terms of assembly, homodimer.

It catalyses the reaction (S)-4-amino-5-oxopentanoate + tRNA(Glu) + NADP(+) = L-glutamyl-tRNA(Glu) + NADPH + H(+). It functions in the pathway porphyrin-containing compound metabolism; protoporphyrin-IX biosynthesis; 5-aminolevulinate from L-glutamyl-tRNA(Glu): step 1/2. In terms of biological role, catalyzes the NADPH-dependent reduction of glutamyl-tRNA(Glu) to glutamate 1-semialdehyde (GSA). In Pseudoalteromonas atlantica (strain T6c / ATCC BAA-1087), this protein is Glutamyl-tRNA reductase.